The following is a 437-amino-acid chain: UDP-N-acetylmuramate--L-alanine ligase (437 aa).

108–114 (GAHGKTS) contributes to the ATP binding site.

Belongs to the MurCDEF family.

It is found in the cytoplasm. The enzyme catalyses UDP-N-acetyl-alpha-D-muramate + L-alanine + ATP = UDP-N-acetyl-alpha-D-muramoyl-L-alanine + ADP + phosphate + H(+). Its pathway is cell wall biogenesis; peptidoglycan biosynthesis. Cell wall formation. This Staphylococcus aureus (strain MRSA252) protein is UDP-N-acetylmuramate--L-alanine ligase.